We begin with the raw amino-acid sequence, 447 residues long: Citrate synthase-like protein oryE (447 aa).

Catalysis depends on residues His-331 and Asp-387.

This sequence belongs to the citrate synthase family.

It functions in the pathway secondary metabolite biosynthesis. Functionally, citrate synthase-like protein; part of the gene cluster that mediates the biosynthesis of oryzines, natural products with an unusual maleidride backbone. The two subunits of the fungal fatty acid synthase oryfasA and oryfasB probably form octenoic acid. This fatty acid is most likely activated by the acyl-CoA ligase oryP to give octenyl-CoA before the citrate synthase-like protein oryE catalyzes condensation with oxaloacetate to form tricarboxylic acid. The next steps of the pathways are conjectural, but a favorite possible route has been proposed, beginning with decarboxylation and concomitant dehydration by the decarboxylase oryM, followed by tautomerization, which may lead to the production of a diene intermediate. Reduction of this diene intermediate could give the known metabolite piliformic acid. On the pathway to oryzine B and oryzine A, however, hydroxylation of the diene by the alpha-ketoglutarate-dependent dioxygenase oryG and lactonisation by the lactonohydrolases oryH or oryL could give oryzine B directly. Finally, enoyl reduction by the dehydrogenase oryD would then convert oryzine B into oryzine A. This is Citrate synthase-like protein oryE from Aspergillus oryzae (strain ATCC 42149 / RIB 40) (Yellow koji mold).